Consider the following 34-residue polypeptide: MATALTSAEVFVALVVAAHAAVLALRLSISLYEA.

A helical transmembrane segment spans residues 10-32 (VFVALVVAAHAAVLALRLSISLY).

The protein belongs to the PsaM family.

It is found in the cellular thylakoid membrane. This Parasynechococcus marenigrum (strain WH8102) protein is Photosystem I reaction center subunit XII.